Consider the following 154-residue polypeptide: Aspartate carbamoyltransferase regulatory chain (154 aa).

Residues C109, C114, C138, and C141 each coordinate Zn(2+).

Belongs to the PyrI family. In terms of assembly, contains catalytic and regulatory chains. It depends on Zn(2+) as a cofactor.

Functionally, involved in allosteric regulation of aspartate carbamoyltransferase. The protein is Aspartate carbamoyltransferase regulatory chain of Tolumonas auensis (strain DSM 9187 / NBRC 110442 / TA 4).